We begin with the raw amino-acid sequence, 480 residues long: Protein nucleotidyltransferase YdiU (480 aa).

ATP contacts are provided by Gly86, Gly88, Arg89, Lys109, Asp121, Gly122, Arg172, and Arg179. Asp248 (proton acceptor) is an active-site residue. The Mg(2+) site is built by Asn249 and Asp258. Residue Asp258 coordinates ATP.

This sequence belongs to the SELO family. The cofactor is Mg(2+). Mn(2+) serves as cofactor.

The catalysed reaction is L-seryl-[protein] + ATP = 3-O-(5'-adenylyl)-L-seryl-[protein] + diphosphate. It catalyses the reaction L-threonyl-[protein] + ATP = 3-O-(5'-adenylyl)-L-threonyl-[protein] + diphosphate. The enzyme catalyses L-tyrosyl-[protein] + ATP = O-(5'-adenylyl)-L-tyrosyl-[protein] + diphosphate. It carries out the reaction L-histidyl-[protein] + UTP = N(tele)-(5'-uridylyl)-L-histidyl-[protein] + diphosphate. The catalysed reaction is L-seryl-[protein] + UTP = O-(5'-uridylyl)-L-seryl-[protein] + diphosphate. It catalyses the reaction L-tyrosyl-[protein] + UTP = O-(5'-uridylyl)-L-tyrosyl-[protein] + diphosphate. Its function is as follows. Nucleotidyltransferase involved in the post-translational modification of proteins. It can catalyze the addition of adenosine monophosphate (AMP) or uridine monophosphate (UMP) to a protein, resulting in modifications known as AMPylation and UMPylation. The protein is Protein nucleotidyltransferase YdiU of Salmonella newport (strain SL254).